Reading from the N-terminus, the 288-residue chain is GTP-binding protein 8 (288 aa).

The region spanning 109-282 is the EngB-type G domain; sequence HRPEVCFIGR…RCFIADITGN (174 aa). Residues 117–124, 146–150, 164–167, 226–229, and 261–263 each bind GTP; these read GRSNVGKS, GHTKK, DMPG, TKID, and VSA. Ser-124 and Thr-148 together coordinate Mg(2+).

It belongs to the TRAFAC class TrmE-Era-EngA-EngB-Septin-like GTPase superfamily. EngB GTPase family. The cofactor is Mg(2+).

The sequence is that of GTP-binding protein 8 (GTPBP8) from Bos taurus (Bovine).